A 145-amino-acid polypeptide reads, in one-letter code: Probable low molecular weight protein-tyrosine-phosphatase EpsP (145 aa).

Cysteine 9 functions as the Nucleophile in the catalytic mechanism. Residue arginine 15 is part of the active site. Residue aspartate 114 is the Proton donor of the active site.

It belongs to the low molecular weight phosphotyrosine protein phosphatase family.

It carries out the reaction O-phospho-L-tyrosyl-[protein] + H2O = L-tyrosyl-[protein] + phosphate. It participates in glycan metabolism; exopolysaccharide biosynthesis. May be involved in assembly or function of the EPS I polymerization/export complex and/or the EpsB ATPase. Alternatively it may function in the removal of the terminal phosphate from C55-isoprenyl pyrophosphate in order to recycle the C55-isoprenyl phosphate lipid carrier used in the synthesis of polysaccharide repeat units. The chain is Probable low molecular weight protein-tyrosine-phosphatase EpsP (epsP) from Ralstonia solanacearum (Pseudomonas solanacearum).